Here is a 93-residue protein sequence, read N- to C-terminus: UPF0147 protein MJ1419 (93 aa).

It belongs to the UPF0147 family.

This is UPF0147 protein MJ1419 from Methanocaldococcus jannaschii (strain ATCC 43067 / DSM 2661 / JAL-1 / JCM 10045 / NBRC 100440) (Methanococcus jannaschii).